Consider the following 411-residue polypeptide: Receptor GIN3 (411 aa).

At 1–99 (MSGFVAGEEA…LLPILPHPRN (99 aa)) the chain is on the extracellular side. The chain crosses the membrane as a helical span at residues 100–120 (IPIIVPLFCVFTVMTSLAVGL). At 121–134 (RLWSRQKVAGGIRS) the chain is on the cytoplasmic side. Residues 135–155 (FDWLALAGFGLTIIYGAVSVY) form a helical membrane-spanning segment. Over 156-181 (HSKVSGPYQAFYDRTWDQMKENYKVY) the chain is Extracellular. Residues 182 to 202 (LVLTIMYPFIMGLIKISLLLF) form a helical membrane-spanning segment. Residues 203 to 227 (YYRVATLNYVQWAVYATGSLTIANS) lie on the Cytoplasmic side of the membrane. A helical membrane pass occupies residues 228–248 (IAAIITHCLAFMPIDFWNHFL). Residues 249-262 (QSPFKFNSRTPMLV) lie on the Extracellular side of the membrane. A helical transmembrane segment spans residues 263-283 (FGAVYILTDVAILIIPMPMVF). Residues 284 to 292 (QLKLYPREK) are Cytoplasmic-facing. A helical membrane pass occupies residues 293–313 (VIAVIAFSLGGVACVASGFRI). The Extracellular segment spans residues 314-328 (WAIDEFQNYSGKNSS). N-linked (GlcNAc...) asparagine glycans are attached at residues Asn-321 and Asn-326. The chain crosses the membrane as a helical span at residues 329-349 (GLMIDAWTMIELNLTLICASA). Topologically, residues 350 to 411 (PAIRALAIHY…QSPVIPKEVV (62 aa)) are cytoplasmic. Residues 371–411 (FSSSGATRGSKSAGSSGKSKTPESEKSMQVSQSPVIPKEVV) are disordered. Residues 372–389 (SSSGATRGSKSAGSSGKS) show a composition bias toward low complexity.

Belongs to the SAT4 family. Interacts with guanine nucleotide-binding protein alpha GPA2; to activate adenylate cyclase and positively regulate nematode trap formation.

The protein localises to the cell membrane. Receptor that senses nematode-derived signals at the cell surface and signals via adenylate cyclase to positively regulate trap formation for nematode capture. In Arthrobotrys oligospora (strain ATCC 24927 / CBS 115.81 / DSM 1491) (Nematode-trapping fungus), this protein is Receptor GIN3.